A 374-amino-acid polypeptide reads, in one-letter code: Type IV secretion system protein PtlG (374 aa).

Residues 38 to 56 form a helical membrane-spanning segment; the sequence is WMFALVAVALSCLLATGIW. A disordered region spans residues 86-117; sequence HPREPEPAPLPDMPAAPDPILPQPRPAPPVPP. Over residues 92-117 the composition is skewed to pro residues; sequence PAPLPDMPAAPDPILPQPRPAPPVPP.

This sequence belongs to the TrbI/VirB10 family.

The protein resides in the cell membrane. Component of the type IV secretion system ptl required for secretion of assembled pertussis toxin (PTX) through the outer membrane. The protein is Type IV secretion system protein PtlG (ptlG) of Bordetella pertussis (strain Tohama I / ATCC BAA-589 / NCTC 13251).